The sequence spans 328 residues: Serine protease 27 (328 aa).

The signal sequence occupies residues 1–22 (MRQPHIAALLLLPLLLRSGTEG). Positions 23 to 37 (ARTLRACGHPKMFNR) are cleaved as a propeptide — activation peptide. The Peptidase S1 domain occupies 38–280 (MVGGENALEG…HHKWIHQIIP (243 aa)). Cysteines 63 and 79 form a disulfide. His-78 functions as the Charge relay system in the catalytic mechanism. An N-linked (GlcNAc...) asparagine glycan is attached at Asn-82. The active-site Charge relay system is the Asp-127. Disulfide bonds link Cys-161-Cys-238, Cys-194-Cys-217, and Cys-228-Cys-256. Ser-232 (charge relay system) is an active-site residue.

Belongs to the peptidase S1 family.

Its subcellular location is the secreted. The polypeptide is Serine protease 27 (Prss27) (Mus musculus (Mouse)).